Reading from the N-terminus, the 429-residue chain is 3-phosphoshikimate 1-carboxyvinyltransferase (429 aa).

Lysine 23, serine 24, and arginine 28 together coordinate 3-phosphoshikimate. Residue lysine 23 coordinates phosphoenolpyruvate. Phosphoenolpyruvate contacts are provided by glycine 97 and arginine 125. 7 residues coordinate 3-phosphoshikimate: serine 170, serine 171, glutamine 172, serine 198, aspartate 314, asparagine 338, and lysine 342. Residue glutamine 172 participates in phosphoenolpyruvate binding. Aspartate 314 (proton acceptor) is an active-site residue. Residues arginine 346, arginine 388, and lysine 413 each contribute to the phosphoenolpyruvate site.

It belongs to the EPSP synthase family. As to quaternary structure, monomer.

It is found in the cytoplasm. The enzyme catalyses 3-phosphoshikimate + phosphoenolpyruvate = 5-O-(1-carboxyvinyl)-3-phosphoshikimate + phosphate. It functions in the pathway metabolic intermediate biosynthesis; chorismate biosynthesis; chorismate from D-erythrose 4-phosphate and phosphoenolpyruvate: step 6/7. In terms of biological role, catalyzes the transfer of the enolpyruvyl moiety of phosphoenolpyruvate (PEP) to the 5-hydroxyl of shikimate-3-phosphate (S3P) to produce enolpyruvyl shikimate-3-phosphate and inorganic phosphate. The sequence is that of 3-phosphoshikimate 1-carboxyvinyltransferase from Pectobacterium atrosepticum (strain SCRI 1043 / ATCC BAA-672) (Erwinia carotovora subsp. atroseptica).